The primary structure comprises 432 residues: Glutamate-1-semialdehyde 2,1-aminomutase (432 aa).

Lys269 is modified (N6-(pyridoxal phosphate)lysine).

Belongs to the class-III pyridoxal-phosphate-dependent aminotransferase family. HemL subfamily. As to quaternary structure, homodimer. Pyridoxal 5'-phosphate is required as a cofactor.

The protein localises to the cytoplasm. The enzyme catalyses (S)-4-amino-5-oxopentanoate = 5-aminolevulinate. It functions in the pathway porphyrin-containing compound metabolism; protoporphyrin-IX biosynthesis; 5-aminolevulinate from L-glutamyl-tRNA(Glu): step 2/2. It participates in porphyrin-containing compound metabolism; chlorophyll biosynthesis. The sequence is that of Glutamate-1-semialdehyde 2,1-aminomutase from Chloroherpeton thalassium (strain ATCC 35110 / GB-78).